We begin with the raw amino-acid sequence, 544 residues long: MTKFIFVTGGVVSSLGKGIAAASIAAILESRGLKVTMLKLDPYINVDPGTMSPFQHGEVFVTEDGAETDLDLGHYERFIHAKMKKSNNFTTGQVYESVIAKERRGDYLGGTVQVIPHITDEIKHKVREGAGDVDVAIVEVGGTVGDIESLPFLEAIRQMRSNFGRKNTLYVHLSYVPYIAAAGEIKTKPTQHSVKELREIGIQPDILICRMDRELPQDEKRKIALFCNVEENAVIGCYDADSIYKVPGMLHAQGIDDIICEHLDLSLPPADLSVWNGIIDAIEHPARSVNIAMVGKYVDLTESYKSLSEALKHAGIHTRSEVNIHYIDSEEVERDGCAALKGMDAILVPGGFGKRGVEGKIKAVRYAREHNIPYLGICLGMQMALIEYARDMAGMPGANSTEFDLETDFPVVALIDEWVNHDGKIETRDENSNLGGTMRLGGQECVLESGSLAARIYGAEHIVERHRHRYEVNNHYIDRLEAAGLKISGRSAGAEKLVETIELPNHRWFFACQFHPEFTSTPRDGHPLFKAYVEAALAYQADNK.

The amidoligase domain stretch occupies residues 1–265 (MTKFIFVTGG…DDIICEHLDL (265 aa)). Serine 13 contributes to the CTP binding site. Serine 13 is a binding site for UTP. Residues 14–19 (SLGKGI) and aspartate 71 each bind ATP. Mg(2+)-binding residues include aspartate 71 and glutamate 139. CTP-binding positions include 146 to 148 (DIE), 186 to 191 (KTKPTQ), and lysine 222. UTP is bound by residues 186-191 (KTKPTQ) and lysine 222. Positions 290–542 (NIAMVGKYVD…VEAALAYQAD (253 aa)) constitute a Glutamine amidotransferase type-1 domain. Glycine 351 is a binding site for L-glutamine. Catalysis depends on cysteine 378, which acts as the Nucleophile; for glutamine hydrolysis. L-glutamine is bound by residues 379 to 382 (LGMQ), glutamate 402, and arginine 469. Active-site residues include histidine 515 and glutamate 517.

This sequence belongs to the CTP synthase family. Homotetramer.

The catalysed reaction is UTP + L-glutamine + ATP + H2O = CTP + L-glutamate + ADP + phosphate + 2 H(+). The enzyme catalyses L-glutamine + H2O = L-glutamate + NH4(+). It carries out the reaction UTP + NH4(+) + ATP = CTP + ADP + phosphate + 2 H(+). Its pathway is pyrimidine metabolism; CTP biosynthesis via de novo pathway; CTP from UDP: step 2/2. With respect to regulation, allosterically activated by GTP, when glutamine is the substrate; GTP has no effect on the reaction when ammonia is the substrate. The allosteric effector GTP functions by stabilizing the protein conformation that binds the tetrahedral intermediate(s) formed during glutamine hydrolysis. Inhibited by the product CTP, via allosteric rather than competitive inhibition. Functionally, catalyzes the ATP-dependent amination of UTP to CTP with either L-glutamine or ammonia as the source of nitrogen. Regulates intracellular CTP levels through interactions with the four ribonucleotide triphosphates. The chain is CTP synthase from Laribacter hongkongensis (strain HLHK9).